The primary structure comprises 133 residues: uncharacterized protein (133 aa).

Helical transmembrane passes span 5–27, 42–64, 77–99, and 103–125; these read KLFF…FSLI, IAWN…YSLY, ALIS…TFSS, and LVWW…LLLK.

It is found in the cell membrane. This is an uncharacterized protein from Bacillus subtilis (strain 168).